The sequence spans 100 residues: Histone H3-like 2 (100 aa).

Positions M1–G46 are disordered.

It belongs to the histone H3 family. The nucleosome is a histone octamer containing two molecules each of H2A, H2B, H3 and H4 assembled in one H3-H4 heterotetramer and two H2A-H2B heterodimers. The octamer wraps approximately 147 bp of DNA. In terms of tissue distribution, pollen specific.

It localises to the nucleus. It is found in the chromosome. Its function is as follows. Core component of nucleosome. Nucleosomes wrap and compact DNA into chromatin, limiting DNA accessibility to the cellular machineries which require DNA as a template. Histones thereby play a central role in transcription regulation, DNA repair, DNA replication and chromosomal stability. DNA accessibility is regulated via a complex set of post-translational modifications of histones, also called histone code, and nucleosome remodeling. The polypeptide is Histone H3-like 2 (gcH3) (Lilium longiflorum (Trumpet lily)).